Reading from the N-terminus, the 259-residue chain is 5'-nucleotidase SurE (259 aa).

Residues aspartate 8, aspartate 9, serine 40, and asparagine 92 each coordinate a divalent metal cation.

This sequence belongs to the SurE nucleotidase family. A divalent metal cation is required as a cofactor.

The protein localises to the cytoplasm. It carries out the reaction a ribonucleoside 5'-phosphate + H2O = a ribonucleoside + phosphate. Functionally, nucleotidase that shows phosphatase activity on nucleoside 5'-monophosphates. In Xanthomonas euvesicatoria pv. vesicatoria (strain 85-10) (Xanthomonas campestris pv. vesicatoria), this protein is 5'-nucleotidase SurE.